Here is a 470-residue protein sequence, read N- to C-terminus: MNPNQKIITIGSICMAIGTISLILQIGNIISIWVSHSIQTGSQNHTGICNQRIITYENNTWVNQTYVNISNTNVVAGKDTTSMILAGNSSLCPIRGWAIYSKDNSIRIGSKGDVFVIREPFISCSHLECRTFFLTQGALLNDKHSNGTVKDRSPYRALMSCPIGEAPSPYNSRFESVAWSASACHDGMGWLTIGISGPDDGAVAVLKYNGIITEIIKSWRKQILRTQESECVCVNGSCFTIMTDGPSDGPASYRIFKIEKGKITKSIELDAPNSHYEECSCYPDTGKVMCVCRDNWHGSNRPWVSFNQNLDYQIGYICSGVFGDNPRPKDGKGSCDPVNVDGADGVKGFSYRYGNGVWIGRTKSNSSRKGFEMIWDPNGWTDTDGNFLVKQDVVAMTDWSGYSGSFVQHPELTGLDCMRPCFWVELIRGRPREKTTIWTSGSSISFCGVNSDTVNWSWPDGAELPFTIDK.

The Intravirion segment spans residues 1-6 (MNPNQK). The chain crosses the membrane as a helical span at residues 7–27 (IITIGSICMAIGTISLILQIG). The segment at 11-33 (GSICMAIGTISLILQIGNIISIW) is involved in apical transport and lipid raft association. Over 28 to 470 (NIISIWVSHS…GAELPFTIDK (443 aa)) the chain is Virion surface. The tract at residues 36–90 (HSIQTGSQNHTGICNQRIITYENNTWVNQTYVNISNTNVVAGKDTTSMILAGNSS) is hypervariable stalk region. Asparagine 44, asparagine 58, asparagine 63, asparagine 68, and asparagine 88 each carry an N-linked (GlcNAc...) asparagine; by host glycan. Positions 91–470 (LCPIRGWAIY…GAELPFTIDK (380 aa)) are head of neuraminidase. 8 disulfide bridges follow: cysteine 92–cysteine 417, cysteine 124–cysteine 129, cysteine 184–cysteine 231, cysteine 233–cysteine 238, cysteine 279–cysteine 292, cysteine 281–cysteine 290, cysteine 318–cysteine 335, and cysteine 421–cysteine 447. Substrate is bound at residue arginine 118. Asparagine 146 carries N-linked (GlcNAc...) asparagine; by host glycosylation. The Proton donor/acceptor role is filled by aspartate 151. Arginine 152 serves as a coordination point for substrate. Asparagine 235 is a glycosylation site (N-linked (GlcNAc...) asparagine; by host). 277–278 (EE) is a substrate binding site. A substrate-binding site is contributed by arginine 293. Ca(2+)-binding residues include aspartate 294, glycine 298, and aspartate 324. Asparagine 365 carries an N-linked (GlcNAc...) asparagine; by host glycan. Position 368 (arginine 368) interacts with substrate. The active-site Nucleophile is tyrosine 402. A glycan (N-linked (GlcNAc...) asparagine; by host) is linked at asparagine 455.

It belongs to the glycosyl hydrolase 34 family. In terms of assembly, homotetramer. Requires Ca(2+) as cofactor. N-glycosylated.

The protein localises to the virion membrane. It is found in the host apical cell membrane. It carries out the reaction Hydrolysis of alpha-(2-&gt;3)-, alpha-(2-&gt;6)-, alpha-(2-&gt;8)- glycosidic linkages of terminal sialic acid residues in oligosaccharides, glycoproteins, glycolipids, colominic acid and synthetic substrates.. Its activity is regulated as follows. Inhibited by the neuraminidase inhibitors zanamivir (Relenza) and oseltamivir (Tamiflu). These drugs interfere with the release of progeny virus from infected cells and are effective against all influenza strains. Resistance to neuraminidase inhibitors is quite rare. Functionally, catalyzes the removal of terminal sialic acid residues from viral and cellular glycoconjugates. Cleaves off the terminal sialic acids on the glycosylated HA during virus budding to facilitate virus release. Additionally helps virus spread through the circulation by further removing sialic acids from the cell surface. These cleavages prevent self-aggregation and ensure the efficient spread of the progeny virus from cell to cell. Otherwise, infection would be limited to one round of replication. Described as a receptor-destroying enzyme because it cleaves a terminal sialic acid from the cellular receptors. May facilitate viral invasion of the upper airways by cleaving the sialic acid moieties on the mucin of the airway epithelial cells. Likely to plays a role in the budding process through its association with lipid rafts during intracellular transport. May additionally display a raft-association independent effect on budding. Plays a role in the determination of host range restriction on replication and virulence. Sialidase activity in late endosome/lysosome traffic seems to enhance virus replication. The polypeptide is Neuraminidase (Influenza A virus (strain A/USA:Albany/12/1951 H1N1)).